We begin with the raw amino-acid sequence, 784 residues long: Ribosome biogenesis protein BOP1 homolog (784 aa).

Over residues 1-11 (MTKKLALKRRG) the composition is skewed to basic residues. A disordered region spans residues 1–159 (MTKKLALKRR…DSDTSDEEDI (159 aa)). 4 stretches are compositionally biased toward acidic residues: residues 27 to 36 (SENEEEEEDL), 45 to 54 (EDSTDDEGID), 62 to 73 (SEELQFESDEEG), and 84 to 111 (AEED…EDEE). 2 stretches are compositionally biased toward basic and acidic residues: residues 112 to 123 (KDSKSKQTDDKP) and 138 to 148 (LPKRDSSKPEY). The span at 149-158 (QDSDTSDEED) shows a compositional bias: acidic residues. WD repeat units follow at residues 445–486 (GHTD…RTIE), 488–526 (DEVV…KVLV), 570–612 (THFK…SQIP), 615–653 (KSKG…LVKK), 656–695 (TNSK…KPYQ), 699–738 (LHRN…DLLQ), and 754–784 (RDEF…RLYT).

It belongs to the WD repeat BOP1/ERB1 family.

The protein localises to the nucleus. It is found in the nucleolus. Its subcellular location is the nucleoplasm. Its function is as follows. Required for maturation of ribosomal RNAs and formation of the large ribosomal subunit. This is Ribosome biogenesis protein BOP1 homolog from Drosophila melanogaster (Fruit fly).